The chain runs to 124 residues: Putative RNA polymerase II transcriptional coactivator (124 aa).

Positions 1–61 are disordered; it reads MSSSSSSEDE…GRLKDSDGNE (61 aa). 2 stretches are compositionally biased toward basic and acidic residues: residues 11 to 21 and 39 to 58; these read LEKKVTKEQKK and QEVKKAKNEEEVSGRLKDSD.

Belongs to the transcriptional coactivator PC4 family.

It is found in the nucleus. Functionally, general coactivator that functions cooperatively with TAFs and mediates functional interactions between upstream activators and the general transcriptional machinery. Binds single-stranded DNA. This is Putative RNA polymerase II transcriptional coactivator from Caenorhabditis elegans.